Reading from the N-terminus, the 100-residue chain is Urease subunit gamma (100 aa).

It belongs to the urease gamma subunit family. Heterotrimer of UreA (gamma), UreB (beta) and UreC (alpha) subunits. Three heterotrimers associate to form the active enzyme.

Its subcellular location is the cytoplasm. It catalyses the reaction urea + 2 H2O + H(+) = hydrogencarbonate + 2 NH4(+). Its pathway is nitrogen metabolism; urea degradation; CO(2) and NH(3) from urea (urease route): step 1/1. This is Urease subunit gamma from Cyanothece sp. (strain PCC 7425 / ATCC 29141).